The primary structure comprises 145 residues: Large ribosomal subunit protein uL11 (145 aa).

It belongs to the universal ribosomal protein uL11 family. Part of the ribosomal stalk of the 50S ribosomal subunit. Interacts with L10 and the large rRNA to form the base of the stalk. L10 forms an elongated spine to which L12 dimers bind in a sequential fashion forming a multimeric L10(L12)X complex. Post-translationally, one or more lysine residues are methylated.

Forms part of the ribosomal stalk which helps the ribosome interact with GTP-bound translation factors. This is Large ribosomal subunit protein uL11 from Rickettsia felis (strain ATCC VR-1525 / URRWXCal2) (Rickettsia azadi).